We begin with the raw amino-acid sequence, 440 residues long: D-serine dehydratase (440 aa).

Lys-116 bears the N6-(pyridoxal phosphate)lysine mark.

This sequence belongs to the serine/threonine dehydratase family. DsdA subfamily. Monomer. Pyridoxal 5'-phosphate is required as a cofactor.

It catalyses the reaction D-serine = pyruvate + NH4(+). The polypeptide is D-serine dehydratase (Salmonella paratyphi A (strain ATCC 9150 / SARB42)).